A 98-amino-acid chain; its full sequence is Large ribosomal subunit protein uL23 (98 aa).

Belongs to the universal ribosomal protein uL23 family. As to quaternary structure, part of the 50S ribosomal subunit. Contacts protein L29, and trigger factor when it is bound to the ribosome.

In terms of biological role, one of the early assembly proteins it binds 23S rRNA. One of the proteins that surrounds the polypeptide exit tunnel on the outside of the ribosome. Forms the main docking site for trigger factor binding to the ribosome. The protein is Large ribosomal subunit protein uL23 of Herpetosiphon aurantiacus (strain ATCC 23779 / DSM 785 / 114-95).